The chain runs to 408 residues: Putative gustatory receptor 98c (408 aa).

The Cytoplasmic segment spans residues 1–42 (MEMEAKRSRLLTTARPYLQVLSLFGLTPPAEFFTRTLRKRRR). A helical membrane pass occupies residues 43–63 (FCWMAGYSLYLIAILLMVFYE). The Extracellular segment spans residues 64–92 (FHANIVSLHLEIYKFHVEDFSKVMGRTQK). The chain crosses the membrane as a helical span at residues 93–113 (FLIVAIATCNQLNILLNYGRL). Residues 114–146 (GLIYDEIANLDLGIDKSSKNFCGKSHWWSFRLR) are Cytoplasmic-facing. Residues 147–167 (LTLSIGLWMVIIIGVIPRLTL) traverse the membrane as a helical segment. The Extracellular segment spans residues 168 to 183 (GRAGPFFHWVNQVLTQ). A helical membrane pass occupies residues 184 to 204 (IILIMLQLKGPEYCLFVLLVY). Residues 205–261 (ELILRTRHVLEQLKDDLEDFDCGARIQELCVTLKQNQLLIGRIWRLVDEIGAYFRWS) are Cytoplasmic-facing. A helical membrane pass occupies residues 262–282 (MTLLFLYNGLTILHVVNWAII). At 283–296 (RSIDPNDCCQLNRL) the chain is on the extracellular side. The chain crosses the membrane as a helical span at residues 297 to 317 (GSITFLSFNLLLTCFFSECCV). Over 318-367 (KTYNSISYILHQIGCLPTAEEFQMLKMGLKEYILQMQHLKLLFTCGGLFD) the chain is Cytoplasmic. A helical transmembrane segment spans residues 368–388 (INIKLFGGMLVTLCGYVIIIV). Residues 389-408 (QFKIQDFALIGYRQNTSDTS) lie on the Extracellular side of the membrane. An N-linked (GlcNAc...) asparagine glycan is attached at Asn403.

Belongs to the insect chemoreceptor superfamily. Gustatory receptor (GR) family. Gr2a subfamily.

It localises to the cell membrane. Its function is as follows. Probable gustatory receptor which mediates acceptance or avoidance behavior, depending on its substrates. This Drosophila melanogaster (Fruit fly) protein is Putative gustatory receptor 98c (Gr98c).